We begin with the raw amino-acid sequence, 1096 residues long: Protein transport protein SEC24 B (1096 aa).

A disordered region spans residues 1-315 (MAAPVPPGAY…SAPGTPGSIY (315 aa)). Positions 12-23 (PNNNQQNSGGPP) are enriched in low complexity. Positions 27–45 (PGSQGNPNSLAANMQNLNI) are enriched in polar residues. Residues 47–64 (RPPPPMPGSGPRPSPPFG) are compositionally biased toward pro residues. Residues 65–78 (QSPQSFPQQQQQQP) show a composition bias toward low complexity. Positions 79–92 (RPSPMARPGPPPPA) are enriched in pro residues. A compositionally biased stretch (low complexity) spans 93–107 (AMARPGGPPQVSQPG). Positions 108-122 (GFPPVGRPVAPPSNQ) are enriched in pro residues. Positions 140–149 (SFPQPGGFPA) are enriched in low complexity. 4 stretches are compositionally biased toward pro residues: residues 150-160 (SGPPGGVPSGP), 171-186 (SPPPMGPGMSMPPPSG), 246-258 (MAPPPPYGQPPNA), and 287-303 (GRPPMPGGFPYGAPPQQ). Residues cysteine 433, cysteine 436, cysteine 455, and cysteine 458 each coordinate Zn(2+). Positions 433–458 (CSRCKGYVNPFMKFIDQGRKFICNLC) are zinc finger-like.

Belongs to the SEC23/SEC24 family. SEC24 subfamily. In terms of assembly, component of the coat protein complex II (COPII), composed of at least five proteins: the Sec23/24 complex, the Sec13/31 complex and Sar1. In terms of tissue distribution, mainly expressed in pollen, roots, stems, petioles and hypocotyls, and, to a lower extent, in leaves and cotyledons.

Its subcellular location is the cytoplasmic vesicle. It localises to the COPII-coated vesicle membrane. The protein resides in the endoplasmic reticulum membrane. It is found in the golgi apparatus membrane. Component of the coat protein complex II (COPII), that covers ER-derived vesicles involved in transport from the endoplasmic reticulum to the Golgi apparatus. COPII is composed of at least five proteins: the SEC23/24 complex, the SEC13/31 complex, and the protein SAR1. Acts in the cytoplasm to promote the transport of secretory, plasma membrane, and vacuolar proteins from the endoplasmic reticulum to the Golgi complex. The chain is Protein transport protein SEC24 B from Arabidopsis thaliana (Mouse-ear cress).